Reading from the N-terminus, the 818-residue chain is Adhesion G protein-coupled receptor E5 (818 aa).

Positions 1–23 are cleaved as a signal peptide; the sequence is MRGVRCPGLLVVCILLSLSGAGT. The Extracellular segment spans residues 24 to 533; that stretch reads QKAESKNCAK…VQDPRLELIT (510 aa). One can recognise an EGF-like 1 domain in the interval 27–68; sequence ESKNCAKWCPINSKCVSNRSCVCKPGFSSEKELITNPAESCE. Disulfide bonds link Cys31-Cys41, Cys35-Cys47, Cys49-Cys67, Cys73-Cys86, Cys80-Cys95, Cys97-Cys118, Cys169-Cys182, Cys176-Cys191, Cys193-Cys212, Cys218-Cys231, Cys225-Cys240, and Cys242-Cys260. Asn44 carries N-linked (GlcNAc...) asparagine glycosylation. Residues 69–119 form the EGF-like 2; calcium-binding domain; that stretch reads DINECLLPGFSCGDFAMCKNSEGSYTCVCNLGYKLLSGAESFVNESENTCQ. Asn112 carries an N-linked (GlcNAc...) asparagine glycan. In terms of domain architecture, EGF-like 3; calcium-binding spans 165–213; it reads DVNECISGQNHCHQSTHCINKLGGYSCICRQGWKPVPGSPNGPVSTVCE. The EGF-like 4; calcium-binding domain maps to 214–261; the sequence is DVDECSSGQHQCHNSTVCKNTVGSYKCHCRPGWKPTSGSLRGPDTICQ. Asn227 carries N-linked (GlcNAc...) asparagine glycosylation. 2 N-linked (GlcNAc...) asparagine glycosylation sites follow: Asn299 and Asn395. In terms of domain architecture, GAIN-B spans 347–525; that stretch reads PFTYTSPSNT…AILMAQYHVQ (179 aa). Ser425 is modified (phosphoserine). N-linked (GlcNAc...) asparagine glycans are attached at residues Asn461 and Asn502. 2 disulfide bridges follow: Cys482-Cys507 and Cys499-Cys509. A GPS region spans residues 482 to 525; it reads CAFWKAHNGNGYWDTDGCSMNGTGFCHCNHLTSFAILMAQYHVQ. A helical membrane pass occupies residues 534–554; sequence KVGLLLSLICLLLCILTFLLV. Residues 555 to 562 lie on the Cytoplasmic side of the membrane; the sequence is KPIQSSRT. The helical transmembrane segment at 563-583 threads the bilayer; sequence MVHLHLCICLFLGSIIFLVGV. Residues 584–602 are Extracellular-facing; the sequence is ENEGGEVGLRCRLVAMMLH. A helical transmembrane segment spans residues 603–623; that stretch reads FCFLAAFCWMALEGVELYFLV. The Cytoplasmic segment spans residues 624–637; that stretch reads VRVFQGQGLSTWQR. A helical membrane pass occupies residues 638-658; the sequence is CLIGYGVPLLIVAISMAVVKM. The Extracellular portion of the chain corresponds to 659–679; it reads DGYGHATYCWLDFRKQGFLWS. The chain crosses the membrane as a helical span at residues 680–700; sequence FSGPVAFIIFCNAAIFVITVW. At 701–723 the chain is on the cytoplasmic side; sequence KLTKKFSEINPNMKKLRKARVLT. Residues 724 to 744 traverse the membrane as a helical segment; that stretch reads ITAIAQLLVLGCTWGFGLFLF. The Extracellular portion of the chain corresponds to 745–752; the sequence is NPHSTWLS. The chain crosses the membrane as a helical span at residues 753 to 773; sequence YIFTLLNCLQGLFLYVMLCLL. At 774 to 818 the chain is on the cytoplasmic side; it reads NKKVREEYWKWACMVTGSKYTEFNSSTTGTGTSQTRALRSSESGM. Position 798 is a phosphoserine (Ser798). Residues 799 to 808 are compositionally biased toward low complexity; the sequence is STTGTGTSQT. The segment at 799–818 is disordered; it reads STTGTGTSQTRALRSSESGM. Phosphothreonine is present on Thr808. A compositionally biased stretch (polar residues) spans 809 to 818; sequence RALRSSESGM. 2 positions are modified to phosphoserine: Ser814 and Ser816.

This sequence belongs to the G-protein coupled receptor 2 family. LN-TM7 subfamily. As to quaternary structure, forms a heterodimer, consisting of a large extracellular region (alpha subunit) non-covalently linked to a seven-transmembrane moiety (beta subunit). Interacts with complement decay-accelerating factor (DAF). The largest isoform (isoform 1) do not interact with DAF. Also interacts with chondroitin sulfate. Proteolytically cleaved into 2 subunits, an extracellular alpha subunit and a seven-transmembrane subunit. In terms of tissue distribution, although predominantly expressed by cells of the immune system, expressed ubiquitously with particularly high levels of expression in the lung and the thymus gland. In the spleen, expression is detected on most myeloid cells and variable portions of T-cells, B-cells and NK cells. In the bone marrow, expressed in nearly all myeloid cells, whereas little if any expression is found on erythroid cells.

Its subcellular location is the cell membrane. It localises to the secreted. It is found in the extracellular space. Functionally, receptor potentially involved in both adhesion and signaling processes early after leukocyte activation. Plays an essential role in leukocyte migration. This chain is Adhesion G protein-coupled receptor E5, found in Mus musculus (Mouse).